The primary structure comprises 311 residues: Serpentine receptor class gamma-6 (311 aa).

7 consecutive transmembrane segments (helical) span residues 24–44 (MGQL…IYVI), 58–78 (FWLL…FDIF), 101–121 (PLLI…KMVA), 148–168 (LTAC…NILI), 200–220 (YMQI…AILW), 235–255 (IWFA…YLHM), and 266–286 (IFML…VIMI).

It belongs to the nematode receptor-like protein srg family.

It is found in the membrane. This is Serpentine receptor class gamma-6 (srg-6) from Caenorhabditis elegans.